The chain runs to 196 residues: SPRY domain-containing protein 7 (196 aa).

The region spanning 1–184 (MAASVFCCLR…FSEFYHTPPP (184 aa)) is the B30.2/SPRY domain.

In Gallus gallus (Chicken), this protein is SPRY domain-containing protein 7 (SPRYD7).